The following is a 432-amino-acid chain: Enolase (432 aa).

Position 167 (glutamine 167) interacts with (2R)-2-phosphoglycerate. Glutamate 209 acts as the Proton donor in catalysis. Residues aspartate 246, glutamate 290, and aspartate 317 each contribute to the Mg(2+) site. (2R)-2-phosphoglycerate-binding residues include lysine 342, arginine 371, serine 372, and lysine 393. Lysine 342 (proton acceptor) is an active-site residue.

The protein belongs to the enolase family. Component of the RNA degradosome, a multiprotein complex involved in RNA processing and mRNA degradation. Requires Mg(2+) as cofactor.

The protein resides in the cytoplasm. Its subcellular location is the secreted. It is found in the cell surface. The enzyme catalyses (2R)-2-phosphoglycerate = phosphoenolpyruvate + H2O. It participates in carbohydrate degradation; glycolysis; pyruvate from D-glyceraldehyde 3-phosphate: step 4/5. Its function is as follows. Catalyzes the reversible conversion of 2-phosphoglycerate (2-PG) into phosphoenolpyruvate (PEP). It is essential for the degradation of carbohydrates via glycolysis. The sequence is that of Enolase from Salmonella dublin (strain CT_02021853).